Consider the following 68-residue polypeptide: Disintegrin EMS11A (68 aa).

Residues 1-65 (NSAHPCCDPV…DCPRNRYKGK (65 aa)) enclose the Disintegrin domain. 4 cysteine pairs are disulfide-bonded: C6–C29, C20–C26, C25–C50, and C38–C57. The Cell attachment site; atypical (MLD) motif lies at 42-44 (MLD).

Belongs to the disintegrin family. Dimeric disintegrin subfamily. As to quaternary structure, heterodimer; disulfide-linked. In terms of tissue distribution, expressed by the venom gland.

It is found in the secreted. Its function is as follows. Poor inhibitor of platelet aggregation. The disintegrin inhibits the adhesion of both the alpha-4/beta-1 (ITGA4/ITGB1) and the alpha-5/beta-1 (ITGA5/ITGB1) integrins to VCAM-1 and fibronectin respectively with almost the same degree of specificity. Inhibition on alpha-IIb/beta-3 (ITGA2B/ITGB3) is low. The sequence is that of Disintegrin EMS11A from Echis multisquamatus (Central Asian sand viper).